The sequence spans 498 residues: MGKYVVALDQGTTSSRAIIFDKEQNIVGVSQKEFTQIYPHEGWVEHNPLEIWSSQYGVLQEVLAKTNITADEISAIGITNQRETTIVWDKNTGEPVYNAIVWQCRRTAGIVDELKKDDEFAEYVKANTGLLLDAYFSGTKIKWILDNVEGAREKAEKGDLLFGTVDTWLVWKLTNGKVHVTDYTNASRTMLYNIKELRWDEKIINKLGIPTSMLPEVKNSSEVYGHTNLGGVGGVRVPISGMAGDQQCALFGQTCFEKGSAKNTYGTGCFLLMNTGEDMVLSKNGLVTTIAVGINDKIEYALEGSVFVGGAVIQWIRDELQFIHDAADSEYFAKKVEDNGGVYVVPAFVGLGAPYWDMYARGAIFGLTRGANRNHIIRAALESIAYQTNDLLTAMAEDAGCKLASLRVDGGASRNDLLMQFQADISNTQVLRPIITETTALGAAYLAGLAVGFWESKEEIATKWAVSKSYGPTFESAKREKLNKGWKNAVSRVKGWAE.

Thr12 contacts ADP. Residues Thr12, Thr13, and Ser14 each coordinate ATP. A sn-glycerol 3-phosphate-binding site is contributed by Thr12. An ADP-binding site is contributed by Arg16. Arg82, Glu83, Tyr135, and Asp245 together coordinate sn-glycerol 3-phosphate. Glycerol-binding residues include Arg82, Glu83, Tyr135, Asp245, and Gln246. ADP contacts are provided by Thr267 and Gly310. The ATP site is built by Thr267, Gly310, Gln314, and Gly411. Positions 411 and 415 each coordinate ADP.

The protein belongs to the FGGY kinase family. As to quaternary structure, homotetramer and homodimer (in equilibrium).

The enzyme catalyses glycerol + ATP = sn-glycerol 3-phosphate + ADP + H(+). Its pathway is polyol metabolism; glycerol degradation via glycerol kinase pathway; sn-glycerol 3-phosphate from glycerol: step 1/1. With respect to regulation, activated by phosphorylation and inhibited by fructose 1,6-bisphosphate (FBP). Functionally, key enzyme in the regulation of glycerol uptake and metabolism. Catalyzes the phosphorylation of glycerol to yield sn-glycerol 3-phosphate. The polypeptide is Glycerol kinase (Clostridium botulinum (strain Alaska E43 / Type E3)).